Here is a 270-residue protein sequence, read N- to C-terminus: MHALGRIPTLTLLIFINIFVSGSSCTDENQTIQNDSSSSLTQVNTTMSVQMDKKALLCCFSSPLINAVLITWIIKHRHLPSCTIAYNLDKKTNETSCLGRNITWASTPDHSPELQISAVALQHEGTYTCEIVTPEGNLEKVYDLQVLVPPEVTYFPGKNRTAVCEAMAGKPAAQISWTPDGDCVTKSESHSNGTVTVRSTCHWEQNNVSVVSCLVSHSTGNQSLSIELSQGTMTTPRSLLTILYVKMALLVIILLNVGFAFFQKRNFART.

Positions 1-25 are cleaved as a signal peptide; the sequence is MHALGRIPTLTLLIFINIFVSGSSC. In terms of domain architecture, Ig-like V-type spans 26 to 145; it reads TDENQTIQND…GNLEKVYDLQ (120 aa). The Extracellular segment spans residues 26 to 241; sequence TDENQTIQND…TMTTPRSLLT (216 aa). Residues asparagine 29 and asparagine 44 are each glycosylated (N-linked (GlcNAc...) asparagine). Intrachain disulfides connect cysteine 58–cysteine 129, cysteine 82–cysteine 97, cysteine 164–cysteine 213, and cysteine 183–cysteine 201. Residues 134 to 229 enclose the Ig-like C2-type domain; that stretch reads PEGNLEKVYD…GNQSLSIELS (96 aa). Asparagine 192 carries N-linked (GlcNAc...) asparagine glycosylation. The chain crosses the membrane as a helical span at residues 242 to 262; that stretch reads ILYVKMALLVIILLNVGFAFF. Residues 263–270 lie on the Cytoplasmic side of the membrane; the sequence is QKRNFART.

It belongs to the CD200R family. Interacts with TYROBP. As to expression, highly expressed in monocytes, NK cells and a subset of NKT cells. Weakly expressed in granulocytes and B-cells (at protein level). Expressed in brain, lung, testis, thymus, intestine and uterus. Expressed in bone marrow derived-macrophage and dendritic cells and mast cells.

The protein resides in the membrane. Functionally, involved in the recruitment or surface expression of the TYROBP receptor. This chain is Cell surface glycoprotein CD200 receptor 4 (Cd200r4), found in Mus musculus (Mouse).